The sequence spans 295 residues: 4-hydroxy-tetrahydrodipicolinate synthase (295 aa).

T46 lines the pyruvate pocket. Y134 (proton donor/acceptor) is an active-site residue. K162 acts as the Schiff-base intermediate with substrate in catalysis. Residue I205 participates in pyruvate binding.

It belongs to the DapA family. In terms of assembly, homotetramer; dimer of dimers.

Its subcellular location is the cytoplasm. It catalyses the reaction L-aspartate 4-semialdehyde + pyruvate = (2S,4S)-4-hydroxy-2,3,4,5-tetrahydrodipicolinate + H2O + H(+). It functions in the pathway amino-acid biosynthesis; L-lysine biosynthesis via DAP pathway; (S)-tetrahydrodipicolinate from L-aspartate: step 3/4. Its function is as follows. Catalyzes the condensation of (S)-aspartate-beta-semialdehyde [(S)-ASA] and pyruvate to 4-hydroxy-tetrahydrodipicolinate (HTPA). This Anaeromyxobacter sp. (strain K) protein is 4-hydroxy-tetrahydrodipicolinate synthase.